Consider the following 109-residue polypeptide: Glutaredoxin-C13 (109 aa).

The Glutaredoxin domain occupies 2–108 (AEMVARLASE…PMLKNAGALW (107 aa)). Cys-22 and Cys-25 are oxidised to a cystine. The Responsive for interaction with TGA factors signature appears at 106–109 (ALWL).

It belongs to the glutaredoxin family. CC-type subfamily.

The protein resides in the cytoplasm. It localises to the nucleus. In terms of biological role, has a glutathione-disulfide oxidoreductase activity in the presence of NADPH and glutathione reductase. Reduces low molecular weight disulfides and proteins. This chain is Glutaredoxin-C13 (GRXC13), found in Oryza sativa subsp. japonica (Rice).